A 179-amino-acid chain; its full sequence is Ribosome maturation factor RimM (179 aa).

Positions 100-176 constitute a PRC barrel domain; sequence KEEFHLLELI…FVIINPPNGL (77 aa).

This sequence belongs to the RimM family. As to quaternary structure, binds ribosomal protein uS19.

The protein resides in the cytoplasm. An accessory protein needed during the final step in the assembly of 30S ribosomal subunit, possibly for assembly of the head region. Essential for efficient processing of 16S rRNA. May be needed both before and after RbfA during the maturation of 16S rRNA. It has affinity for free ribosomal 30S subunits but not for 70S ribosomes. The protein is Ribosome maturation factor RimM of Prochlorococcus marinus (strain MIT 9301).